Here is a 555-residue protein sequence, read N- to C-terminus: Branched-chain-amino-acid aminotransferase-like protein 1 (555 aa).

It belongs to the class-IV pyridoxal-phosphate-dependent aminotransferase family.

The protein is Branched-chain-amino-acid aminotransferase-like protein 1 of Arabidopsis thaliana (Mouse-ear cress).